We begin with the raw amino-acid sequence, 334 residues long: Ornithine carbamoyltransferase (334 aa).

Carbamoyl phosphate is bound by residues 57-60 (STRT), Gln84, Arg108, and 135-138 (HPTQ). L-ornithine is bound by residues Asn168, Asp232, and 236–237 (SM). Carbamoyl phosphate-binding positions include 274–275 (CL) and Arg321.

This sequence belongs to the aspartate/ornithine carbamoyltransferase superfamily. OTCase family.

The protein resides in the cytoplasm. It carries out the reaction carbamoyl phosphate + L-ornithine = L-citrulline + phosphate + H(+). It participates in amino-acid biosynthesis; L-arginine biosynthesis; L-arginine from L-ornithine and carbamoyl phosphate: step 1/3. In terms of biological role, reversibly catalyzes the transfer of the carbamoyl group from carbamoyl phosphate (CP) to the N(epsilon) atom of ornithine (ORN) to produce L-citrulline. The chain is Ornithine carbamoyltransferase from Actinobacillus pleuropneumoniae serotype 5b (strain L20).